We begin with the raw amino-acid sequence, 269 residues long: LOB domain-containing protein 6 (269 aa).

The LOB domain maps to 37–138; that stretch reads SPCAACKFLR…QDLARAKFEL (102 aa).

The protein belongs to the LOB domain-containing protein family.

Its subcellular location is the nucleus. Its function is as follows. Negative regulator of cell proliferation in the adaxial side of leaves. Regulates the formation of a symmetric lamina and the establishment of venation. This is LOB domain-containing protein 6 (LBD6) from Oryza sativa subsp. indica (Rice).